Reading from the N-terminus, the 308-residue chain is N-acetylmuramic acid 6-phosphate etherase (308 aa).

Residues isoleucine 62 to lysine 225 enclose the SIS domain. Residue glutamate 90 is the Proton donor of the active site. The active site involves glutamate 121.

It belongs to the GCKR-like family. MurNAc-6-P etherase subfamily. As to quaternary structure, homodimer.

It carries out the reaction N-acetyl-D-muramate 6-phosphate + H2O = N-acetyl-D-glucosamine 6-phosphate + (R)-lactate. It functions in the pathway amino-sugar metabolism; 1,6-anhydro-N-acetylmuramate degradation. The protein operates within amino-sugar metabolism; N-acetylmuramate degradation. Its pathway is cell wall biogenesis; peptidoglycan recycling. Specifically catalyzes the cleavage of the D-lactyl ether substituent of MurNAc 6-phosphate, producing GlcNAc 6-phosphate and D-lactate. Together with AnmK, is also required for the utilization of anhydro-N-acetylmuramic acid (anhMurNAc) either imported from the medium or derived from its own cell wall murein, and thus plays a role in cell wall recycling. This chain is N-acetylmuramic acid 6-phosphate etherase, found in Vibrio campbellii (strain ATCC BAA-1116).